A 483-amino-acid chain; its full sequence is Altronate oxidoreductase (483 aa).

I18–A29 lines the NAD(+) pocket.

Belongs to the mannitol dehydrogenase family. UxaB subfamily.

The enzyme catalyses D-altronate + NAD(+) = keto-D-tagaturonate + NADH + H(+). The protein operates within carbohydrate metabolism; pentose and glucuronate interconversion. The sequence is that of Altronate oxidoreductase from Cronobacter sakazakii (strain ATCC BAA-894) (Enterobacter sakazakii).